The primary structure comprises 88 residues: ATP synthase subunit c 1 (88 aa).

2 consecutive transmembrane segments (helical) span residues Phe4–Ile24 and Ile53–Leu73.

This sequence belongs to the ATPase C chain family. In terms of assembly, F-type ATPases have 2 components, F(1) - the catalytic core - and F(0) - the membrane proton channel. F(1) has five subunits: alpha(3), beta(3), gamma(1), delta(1), epsilon(1). F(0) has three main subunits: a(1), b(2) and c(10-14). The alpha and beta chains form an alternating ring which encloses part of the gamma chain. F(1) is attached to F(0) by a central stalk formed by the gamma and epsilon chains, while a peripheral stalk is formed by the delta and b chains.

It is found in the cell inner membrane. Functionally, f(1)F(0) ATP synthase produces ATP from ADP in the presence of a proton or sodium gradient. F-type ATPases consist of two structural domains, F(1) containing the extramembraneous catalytic core and F(0) containing the membrane proton channel, linked together by a central stalk and a peripheral stalk. During catalysis, ATP synthesis in the catalytic domain of F(1) is coupled via a rotary mechanism of the central stalk subunits to proton translocation. Key component of the F(0) channel; it plays a direct role in translocation across the membrane. A homomeric c-ring of between 10-14 subunits forms the central stalk rotor element with the F(1) delta and epsilon subunits. This Syntrophotalea carbinolica (strain DSM 2380 / NBRC 103641 / GraBd1) (Pelobacter carbinolicus) protein is ATP synthase subunit c 1.